The primary structure comprises 261 residues: Undecaprenyl-diphosphatase (261 aa).

A run of 8 helical transmembrane segments spans residues M1 to V21, F41 to Y61, L69 to F89, A95 to L115, I129 to V149, A169 to L186, I206 to I226, and R241 to I261.

It belongs to the UppP family.

The protein resides in the cell inner membrane. It carries out the reaction di-trans,octa-cis-undecaprenyl diphosphate + H2O = di-trans,octa-cis-undecaprenyl phosphate + phosphate + H(+). Its function is as follows. Catalyzes the dephosphorylation of undecaprenyl diphosphate (UPP). Confers resistance to bacitracin. The protein is Undecaprenyl-diphosphatase of Flavobacterium psychrophilum (strain ATCC 49511 / DSM 21280 / CIP 103535 / JIP02/86).